Here is a 312-residue protein sequence, read N- to C-terminus: MMDKIIQTLTLTFTFLYYSIPMLIVGLFISQILIESNIIKKIYFIGKIFTRLANLPEECGIAITTSFIEPRMANIMLVDFYKKGIINKKELYISSLIDAFPAMLRHWDSLLPILLATLGFFGIIYFIILVLIGFIQTLIFMAIGKITLKNREYKEDNTDKKIKLNKDVVYTAFKNTIKYGIPIIRDITIASIITSFLIEFGFFDYITEIIKNKAYYLPLSVEEITVAVTQPINYIGAFVLAGEFLNRGILDEIEVVRALLLGSILSSIPALRFLAPYYIGIYGFKDGFNLMMISTLVRILITALFVIITLIL.

The next 6 membrane-spanning stretches (helical) occupy residues 9 to 29 (LTLT…GLFI), 115 to 135 (LATL…IGFI), 187 to 207 (ITIA…DYIT), 224 to 244 (ITVA…AGEF), 264 to 284 (ILSS…IYGF), and 292 to 312 (MIST…TLIL).

It is found in the cell membrane. This is an uncharacterized protein from Methanocaldococcus jannaschii (strain ATCC 43067 / DSM 2661 / JAL-1 / JCM 10045 / NBRC 100440) (Methanococcus jannaschii).